Consider the following 149-residue polypeptide: Transcriptional repressor NrdR (149 aa).

Residues 3–34 (CPFCSAVDTKVIDSRLVAEGHQVRRRRECLLC) fold into a zinc finger. The ATP-cone domain occupies 49-139 (PRVIKSNGSR…VYRSFEDIRE (91 aa)).

The protein belongs to the NrdR family. It depends on Zn(2+) as a cofactor.

Negatively regulates transcription of bacterial ribonucleotide reductase nrd genes and operons by binding to NrdR-boxes. This chain is Transcriptional repressor NrdR, found in Aeromonas hydrophila subsp. hydrophila (strain ATCC 7966 / DSM 30187 / BCRC 13018 / CCUG 14551 / JCM 1027 / KCTC 2358 / NCIMB 9240 / NCTC 8049).